A 462-amino-acid polypeptide reads, in one-letter code: Cysteine--tRNA ligase (462 aa).

Cys-24 serves as a coordination point for Zn(2+). A 'HIGH' region motif is present at residues 26–36 (PTVYDDAHLGH). Zn(2+)-binding residues include Cys-199, His-224, and Glu-228. Residues 256-260 (KMSKS) carry the 'KMSKS' region motif. Residue Lys-259 coordinates ATP.

This sequence belongs to the class-I aminoacyl-tRNA synthetase family. In terms of assembly, monomer. It depends on Zn(2+) as a cofactor.

Its subcellular location is the cytoplasm. It carries out the reaction tRNA(Cys) + L-cysteine + ATP = L-cysteinyl-tRNA(Cys) + AMP + diphosphate. This Campylobacter jejuni subsp. jejuni serotype O:2 (strain ATCC 700819 / NCTC 11168) protein is Cysteine--tRNA ligase (cysS).